Reading from the N-terminus, the 512-residue chain is Glutathione-binding protein GsiB (512 aa).

An N-terminal signal peptide occupies residues 1–26 (MARAVHRSGLVALGIATALMASCAFA).

Belongs to the bacterial solute-binding protein 5 family. In terms of assembly, the complex is composed of two ATP-binding proteins (GsiA), two transmembrane proteins (GsiC and GsiD) and a solute-binding protein (GsiB). In the presence of glutathione, interacts with the transmembrane proteins GsiC and GsiD.

It localises to the periplasm. In terms of biological role, part of the ABC transporter complex GsiABCD involved in glutathione import. Binds glutathione. This chain is Glutathione-binding protein GsiB, found in Escherichia coli (strain K12).